The sequence spans 206 residues: Small ribosomal subunit protein uS4 (206 aa).

The 61-residue stretch at 96–156 folds into the S4 RNA-binding domain; it reads GRLDNVVYRM…EKAKKQSRVK (61 aa).

This sequence belongs to the universal ribosomal protein uS4 family. In terms of assembly, part of the 30S ribosomal subunit. Contacts protein S5. The interaction surface between S4 and S5 is involved in control of translational fidelity.

One of the primary rRNA binding proteins, it binds directly to 16S rRNA where it nucleates assembly of the body of the 30S subunit. In terms of biological role, with S5 and S12 plays an important role in translational accuracy. This Enterobacter sp. (strain 638) protein is Small ribosomal subunit protein uS4.